Reading from the N-terminus, the 428-residue chain is Serine--tRNA ligase (428 aa).

235–237 (TAE) is an L-serine binding site. ATP is bound at residue 266 to 268 (RSE). Glu-289 lines the L-serine pocket. 353–356 (EISS) is an ATP binding site. Ser-389 lines the L-serine pocket.

Belongs to the class-II aminoacyl-tRNA synthetase family. Type-1 seryl-tRNA synthetase subfamily. As to quaternary structure, homodimer. The tRNA molecule binds across the dimer.

It is found in the cytoplasm. It catalyses the reaction tRNA(Ser) + L-serine + ATP = L-seryl-tRNA(Ser) + AMP + diphosphate + H(+). The catalysed reaction is tRNA(Sec) + L-serine + ATP = L-seryl-tRNA(Sec) + AMP + diphosphate + H(+). The protein operates within aminoacyl-tRNA biosynthesis; selenocysteinyl-tRNA(Sec) biosynthesis; L-seryl-tRNA(Sec) from L-serine and tRNA(Sec): step 1/1. Catalyzes the attachment of serine to tRNA(Ser). Is also able to aminoacylate tRNA(Sec) with serine, to form the misacylated tRNA L-seryl-tRNA(Sec), which will be further converted into selenocysteinyl-tRNA(Sec). The sequence is that of Serine--tRNA ligase from Pasteurella multocida (strain Pm70).